A 221-amino-acid polypeptide reads, in one-letter code: Pre-hexon-linking protein VIII (221 aa).

A Phosphothreonine; by host modification is found at T65. The propeptide occupies 113-150 (AAPWSGVKTGSFCGRGLQLAEPPTTAIYPSGLFHLGRG).

The protein belongs to the adenoviridae hexon-linking protein family. Interacts with the peripentonal hexons as well as the hexons in the facets. Part of a complex composed of the core-capsid bridging protein, the endosome lysis protein VI and the hexon-linking protein VIII; these interactions bridge the virus core to the capsid. Post-translationally, cleaved by the viral protease during virion maturation. May cause the middle segment to be shed from the capsid.

The protein resides in the virion. It is found in the host nucleus. Structural component of the virion that acts as a cement protein on the capsid interior and which glue the peripentonal hexons and group-of-nine hexons together. This is Pre-hexon-linking protein VIII from Sus scrofa (Pig).